The primary structure comprises 215 residues: MSLFGLGRNQKTFRPKKSAPSGTKGAELRKHIDATLGSGNLREAVKLPPGEDLNEWLAVNTVDFFNQVNLLFGTLTEFCTPENCSTMTAGPKYEYRWADGVQIKKPIEVSAPKYVEYLMDWIETQLDDETIFPQKLGAAFPPNFKEVVKTIFKRLFRVYAHIYHSHFQKIVSLKEEAHLNTCFKHFILFTHEFVLIDKKELAPLQELIESIIAPY.

The tract at residues 1-25 is disordered; sequence MSLFGLGRNQKTFRPKKSAPSGTKG. Zn(2+) contacts are provided by cysteine 79, cysteine 84, histidine 161, and histidine 166.

The protein belongs to the MOB1/phocein family. As to quaternary structure, interacts with SIK1. As to expression, expression is detected along the vasculature in cotyledons, hypocotyls and roots of 3- to 4-day-old seedlings.

The protein is MOB kinase activator-like 1B of Arabidopsis thaliana (Mouse-ear cress).